The following is a 220-amino-acid chain: Cytidylate kinase (220 aa).

Residue 10-18 (GPASSGKST) coordinates ATP.

The protein belongs to the cytidylate kinase family. Type 1 subfamily.

The protein localises to the cytoplasm. It carries out the reaction CMP + ATP = CDP + ADP. The enzyme catalyses dCMP + ATP = dCDP + ADP. The chain is Cytidylate kinase from Lactococcus lactis subsp. cremoris (strain MG1363).